Here is a 359-residue protein sequence, read N- to C-terminus: tRNA N6-adenosine threonylcarbamoyltransferase (359 aa).

Fe cation contacts are provided by histidine 115 and histidine 119. Substrate-binding positions include 137-141 (LVSGG), aspartate 170, glycine 183, and asparagine 283. Aspartate 311 is a Fe cation binding site. Residues 328 to 359 (APDSLDIAPRSRWPLDEKSAPVFGTGRRGAKA) form a disordered region.

Belongs to the KAE1 / TsaD family. Fe(2+) serves as cofactor.

It localises to the cytoplasm. The catalysed reaction is L-threonylcarbamoyladenylate + adenosine(37) in tRNA = N(6)-L-threonylcarbamoyladenosine(37) in tRNA + AMP + H(+). In terms of biological role, required for the formation of a threonylcarbamoyl group on adenosine at position 37 (t(6)A37) in tRNAs that read codons beginning with adenine. Is involved in the transfer of the threonylcarbamoyl moiety of threonylcarbamoyl-AMP (TC-AMP) to the N6 group of A37, together with TsaE and TsaB. TsaD likely plays a direct catalytic role in this reaction. This Brucella ovis (strain ATCC 25840 / 63/290 / NCTC 10512) protein is tRNA N6-adenosine threonylcarbamoyltransferase.